A 318-amino-acid polypeptide reads, in one-letter code: MSSPLKVIFAGTPDFAASALQALLDANYQIVAVYTQPDRPAGRGNKLLPGPVKQLALKHTIPVEQPLNFKNEEDRQQLRDYEADVMVVAAYGIILPQAVLDAPKRGCLNIHASLLPRWRGAAPIQRAIIAGDQESGITIMQMEAGLDTGPMLLKTVTPISADDTGRTLHDRLAQMGGEAIVKALALLQEDKLQAERQQDDLATYAHKLQKEEARIDWSEPASLIQRKIAAFNPWPVCFTEDNGQTIRIWAASASADMSKAKPGTILERSAEAVKVACGEGVLSITSLQLPGGKPISCKDLINGGKPLMQLGQVLEITS.

113–116 contacts (6S)-5,6,7,8-tetrahydrofolate; the sequence is SLLP.

The protein belongs to the Fmt family.

It catalyses the reaction L-methionyl-tRNA(fMet) + (6R)-10-formyltetrahydrofolate = N-formyl-L-methionyl-tRNA(fMet) + (6S)-5,6,7,8-tetrahydrofolate + H(+). Attaches a formyl group to the free amino group of methionyl-tRNA(fMet). The formyl group appears to play a dual role in the initiator identity of N-formylmethionyl-tRNA by promoting its recognition by IF2 and preventing the misappropriation of this tRNA by the elongation apparatus. This is Methionyl-tRNA formyltransferase from Hahella chejuensis (strain KCTC 2396).